We begin with the raw amino-acid sequence, 109 residues long: Spermidine export protein MdtI (109 aa).

4 helical membrane passes run 6–26 (WVHA…NVFL), 36–56 (IFGL…SQAV), 64–84 (AYAL…WILF), and 88–108 (LNRK…MVKL).

The protein belongs to the drug/metabolite transporter (DMT) superfamily. Small multidrug resistance (SMR) (TC 2.A.7.1) family. MdtI subfamily. Forms a complex with MdtJ.

Its subcellular location is the cell inner membrane. In terms of biological role, catalyzes the excretion of spermidine. This Escherichia coli O139:H28 (strain E24377A / ETEC) protein is Spermidine export protein MdtI.